The following is a 311-amino-acid chain: uncharacterized protein (311 aa).

A helical membrane pass occupies residues 168–188; sequence FNVMKGAILGLPIIGGIIVGV.

It is found in the cell membrane. This is an uncharacterized protein from Edwardsiella tarda.